The primary structure comprises 423 residues: SH2 domain-containing adapter protein F (423 aa).

Disordered stretches follow at residues 1-87 (MQQE…STTR), 110-208 (DPFD…WEWK), and 225-312 (DLPW…GEWT). Over residues 192 to 203 (EDDERPPEEYDQ) the composition is skewed to acidic residues. Residue Tyr201 is modified to Phosphotyrosine. Residues 323–418 (WYHGAISRTD…AEHMSLLYPV (96 aa)) form the SH2 domain.

Interacts with phosphorylated 'Tyr-720' of PDGFRA via its SH2 domain. Post-translationally, may become phosphorylated upon binding to PDGFRA. As to expression, expressed in skeletal muscle, brain, liver, prostate, testis, ovary, small intestine and colon.

Functionally, adapter protein which may play a role in the regulation of apoptosis in response to PDGF. In Homo sapiens (Human), this protein is SH2 domain-containing adapter protein F.